The primary structure comprises 76 residues: Large ribosomal subunit protein bL31 (76 aa).

The protein belongs to the bacterial ribosomal protein bL31 family. Type A subfamily. In terms of assembly, part of the 50S ribosomal subunit.

Binds the 23S rRNA. The protein is Large ribosomal subunit protein bL31 of Picosynechococcus sp. (strain ATCC 27264 / PCC 7002 / PR-6) (Agmenellum quadruplicatum).